Consider the following 110-residue polypeptide: Large ribosomal subunit protein uL24 (110 aa).

Belongs to the universal ribosomal protein uL24 family. Part of the 50S ribosomal subunit.

In terms of biological role, one of two assembly initiator proteins, it binds directly to the 5'-end of the 23S rRNA, where it nucleates assembly of the 50S subunit. One of the proteins that surrounds the polypeptide exit tunnel on the outside of the subunit. In Caldicellulosiruptor saccharolyticus (strain ATCC 43494 / DSM 8903 / Tp8T 6331), this protein is Large ribosomal subunit protein uL24.